The sequence spans 166 residues: Putative pre-16S rRNA nuclease (166 aa).

Residues 1-24 (MPDTAAPTPDRPGPDDPGRGRRLG) are disordered.

The protein belongs to the YqgF nuclease family.

It is found in the cytoplasm. Its function is as follows. Could be a nuclease involved in processing of the 5'-end of pre-16S rRNA. This is Putative pre-16S rRNA nuclease from Mycobacteroides abscessus (strain ATCC 19977 / DSM 44196 / CCUG 20993 / CIP 104536 / JCM 13569 / NCTC 13031 / TMC 1543 / L948) (Mycobacterium abscessus).